A 267-amino-acid polypeptide reads, in one-letter code: 2-keto-3-deoxy-L-rhamnonate aldolase (267 aa).

Histidine 49 acts as the Proton acceptor in catalysis. Position 151 (glutamine 151) interacts with substrate. Residue glutamate 153 participates in Mg(2+) binding. Substrate is bound by residues alanine 178 and aspartate 179. Mg(2+) is bound at residue aspartate 179.

It belongs to the HpcH/HpaI aldolase family. KDR aldolase subfamily. In terms of assembly, homohexamer. The cofactor is Mg(2+).

It catalyses the reaction 2-dehydro-3-deoxy-L-rhamnonate = (S)-lactaldehyde + pyruvate. In terms of biological role, catalyzes the reversible retro-aldol cleavage of 2-keto-3-deoxy-L-rhamnonate (KDR) to pyruvate and lactaldehyde. The chain is 2-keto-3-deoxy-L-rhamnonate aldolase from Salmonella agona (strain SL483).